We begin with the raw amino-acid sequence, 82 residues long: Small ribosomal subunit protein bS18 (82 aa).

Belongs to the bacterial ribosomal protein bS18 family. In terms of assembly, part of the 30S ribosomal subunit. Forms a tight heterodimer with protein bS6.

Binds as a heterodimer with protein bS6 to the central domain of the 16S rRNA, where it helps stabilize the platform of the 30S subunit. This is Small ribosomal subunit protein bS18 from Chlamydia felis (strain Fe/C-56) (Chlamydophila felis).